A 269-amino-acid chain; its full sequence is 3'(2'),5'-bisphosphate nucleotidase CysQ (269 aa).

Mg(2+) is bound by residues glutamate 69, aspartate 89, leucine 91, aspartate 92, and aspartate 216. Position 69 (glutamate 69) interacts with substrate. Residues 91–94 (LDGT) and aspartate 216 each bind substrate.

This sequence belongs to the inositol monophosphatase superfamily. CysQ family. Requires Mg(2+) as cofactor.

It localises to the cell inner membrane. The enzyme catalyses adenosine 3',5'-bisphosphate + H2O = AMP + phosphate. Functionally, converts adenosine-3',5'-bisphosphate (PAP) to AMP. The polypeptide is 3'(2'),5'-bisphosphate nucleotidase CysQ (Haemophilus influenzae (strain ATCC 51907 / DSM 11121 / KW20 / Rd)).